We begin with the raw amino-acid sequence, 151 residues long: Ribosome-binding factor A (151 aa).

The interval 120–151 is disordered; sequence RSPKVVRDLDDTSSDDTSPDANTDTDKETDAE.

Belongs to the RbfA family. As to quaternary structure, monomer. Binds 30S ribosomal subunits, but not 50S ribosomal subunits or 70S ribosomes.

The protein resides in the cytoplasm. Its function is as follows. One of several proteins that assist in the late maturation steps of the functional core of the 30S ribosomal subunit. Associates with free 30S ribosomal subunits (but not with 30S subunits that are part of 70S ribosomes or polysomes). Required for efficient processing of 16S rRNA. May interact with the 5'-terminal helix region of 16S rRNA. The protein is Ribosome-binding factor A of Xanthobacter autotrophicus (strain ATCC BAA-1158 / Py2).